An 85-amino-acid chain; its full sequence is UPF0335 protein WP0746 (85 aa).

It belongs to the UPF0335 family.

The sequence is that of UPF0335 protein WP0746 from Wolbachia pipientis subsp. Culex pipiens (strain wPip).